Here is a 407-residue protein sequence, read N- to C-terminus: Peptidase T (407 aa).

Residue histidine 81 coordinates Zn(2+). Aspartate 83 is an active-site residue. Aspartate 142 is a Zn(2+) binding site. Glutamate 176 functions as the Proton acceptor in the catalytic mechanism. Zn(2+) is bound by residues glutamate 177, aspartate 199, and histidine 381.

This sequence belongs to the peptidase M20B family. It depends on Zn(2+) as a cofactor.

The protein localises to the cytoplasm. It catalyses the reaction Release of the N-terminal residue from a tripeptide.. Cleaves the N-terminal amino acid of tripeptides. The polypeptide is Peptidase T (Streptococcus pneumoniae (strain ATCC 700669 / Spain 23F-1)).